A 713-amino-acid chain; its full sequence is MRLLVAPLLLAWVAGATAAVPVVPWHVPCPPQCACQIRPWYTPRSSYREATTVDCNDLFLTAVPPALPAGTQTLLLQSNSIVRVDQSELGYLANLTELDLSQNSFSDARDCDFHALPQLLSLHLEENQLTRLEDHSFAGLASLQELYLNHNQLYRIAPRAFSGLSNLLRLHLNSNLLRAIDSRWFEMLPNLEILMIGGNKVDAILDMNFRPLANLRSLVLAGMNLREISDYALEGLQSLESLSFYDNQLARVPRRALEQVPGLKFLDLNKNPLQRVGPGDFANMLHLKELGLNNMEELVSIDKFALVNLPELTKLDITNNPRLSFIHPRAFHHLPQMETLMLNNNALSALHQQTVESLPNLQEVGLHGNPIRCDCVIRWANATGTRVRFIEPQSTLCAEPPDLQRLPVREVPFREMTDHCLPLISPRSFPPSLQVASGESMVLHCRALAEPEPEIYWVTPAGLRLTPAHAGRRYRVYPEGTLELRRVTAEEAGLYTCVAQNLVGADTKTVSVVVGRALLQPGRDEGQGLELRVQETHPYHILLSWVTPPNTVSTNLTWSSASSLRGQGATALARLPRGTHSYNITRLLQATEYWACLQVAFADAHTQLACVWARTKEATSCHRALGDRPGLIAILALAVLLLAAGLAAHLGTGQPRKGVGGRRPLPPAWAFWGWSAPSVRVVSAPLVLPWNPGRKLPRSSEGETLLPPLSQNS.

The first 18 residues, 1-18 (MRLLVAPLLLAWVAGATA), serve as a signal peptide directing secretion. Over 19–630 (AVPVVPWHVP…CHRALGDRPG (612 aa)) the chain is Extracellular. An LRRNT domain is found at 20-69 (VPVVPWHVPCPPQCACQIRPWYTPRSSYREATTVDCNDLFLTAVPPALPA). LRR repeat units lie at residues 70 to 91 (GTQT…ELGY), 94 to 115 (NLTE…DFHA), 118 to 139 (QLLS…SFAG), 142 to 163 (SLQE…AFSG), 166 to 187 (NLLR…WFEM), 190 to 211 (NLEI…NFRP), 214 to 235 (NLRS…ALEG), 238 to 259 (SLES…ALEQ), 262 to 283 (GLKF…DFAN), 286 to 305 (HLKE…DKFA), 311 to 333 (ELTK…AFHH), and 336 to 357 (QMET…TVES). Asn-94 is a glycosylation site (N-linked (GlcNAc...) asparagine). The 54-residue stretch at 369 to 422 (NPIRCDCVIRWANATGTRVRFIEPQSTLCAEPPDLQRLPVREVPFREMTDHCLP) folds into the LRRCT domain. N-linked (GlcNAc...) asparagine glycosylation occurs at Asn-381. Residues 422-511 (PLISPRSFPP…LVGADTKTVS (90 aa)) enclose the Ig-like C2-type domain. Cys-445 and Cys-497 are oxidised to a cystine. Asn-555 and Asn-583 each carry an N-linked (GlcNAc...) asparagine glycan. The chain crosses the membrane as a helical span at residues 631-651 (LIAILALAVLLLAAGLAAHLG). At 652 to 713 (TGQPRKGVGG…TLLPPLSQNS (62 aa)) the chain is on the cytoplasmic side.

Overamplified in malignant gliomas.

The protein localises to the membrane. The protein is Leucine-rich repeat neuronal protein 2 (LRRN2) of Homo sapiens (Human).